We begin with the raw amino-acid sequence, 556 residues long: Oxygen-dependent choline dehydrogenase (556 aa).

6–35 (DYIIIGAGSAGNVLAARLTEDPGVTVLLLE) is a binding site for FAD. Histidine 475 serves as the catalytic Proton acceptor.

This sequence belongs to the GMC oxidoreductase family. The cofactor is FAD.

The catalysed reaction is choline + A = betaine aldehyde + AH2. The enzyme catalyses betaine aldehyde + NAD(+) + H2O = glycine betaine + NADH + 2 H(+). It participates in amine and polyamine biosynthesis; betaine biosynthesis via choline pathway; betaine aldehyde from choline (cytochrome c reductase route): step 1/1. Its function is as follows. Involved in the biosynthesis of the osmoprotectant glycine betaine. Catalyzes the oxidation of choline to betaine aldehyde and betaine aldehyde to glycine betaine at the same rate. The sequence is that of Oxygen-dependent choline dehydrogenase from Xanthomonas euvesicatoria pv. vesicatoria (strain 85-10) (Xanthomonas campestris pv. vesicatoria).